The primary structure comprises 233 residues: Histone H1-I (233 aa).

Disordered regions lie at residues 1–55 (MSDS…HPPV) and 115–233 (TGAS…KKSK). Positions 17–29 (KAASPAKSPAKSP) are enriched in low complexity. Positions 51–125 (THPPVSEMVV…GASGSFKMPP (75 aa)) constitute an H15 domain. Composition is skewed to basic and acidic residues over residues 128-137 (KKVDRPESAP) and 146-155 (TRVERKEKKV). Composition is skewed to basic residues over residues 172 to 213 (AAKK…KPTP) and 223 to 233 (AAARKPAKKSK).

The protein belongs to the histone H1/H5 family.

The protein localises to the nucleus. It is found in the chromosome. Its function is as follows. Histones H1 are necessary for the condensation of nucleosome chains into higher-order structures. This Glyptotendipes barbipes (Midge) protein is Histone H1-I.